The primary structure comprises 361 residues: 3-dehydroquinate synthase (361 aa).

NAD(+) is bound by residues 72–77 (SGEKEK), 130–131 (TT), lysine 142, and lysine 151. Residues glutamate 184, histidine 247, and histidine 264 each coordinate Zn(2+).

Belongs to the sugar phosphate cyclases superfamily. Dehydroquinate synthase family. Co(2+) serves as cofactor. It depends on Zn(2+) as a cofactor. The cofactor is NAD(+).

The protein resides in the cytoplasm. It catalyses the reaction 7-phospho-2-dehydro-3-deoxy-D-arabino-heptonate = 3-dehydroquinate + phosphate. It participates in metabolic intermediate biosynthesis; chorismate biosynthesis; chorismate from D-erythrose 4-phosphate and phosphoenolpyruvate: step 2/7. Functionally, catalyzes the conversion of 3-deoxy-D-arabino-heptulosonate 7-phosphate (DAHP) to dehydroquinate (DHQ). The sequence is that of 3-dehydroquinate synthase from Bacillus mycoides (strain KBAB4) (Bacillus weihenstephanensis).